The following is a 391-amino-acid chain: MAPRIAMVAGEASGDLLASHLIRAIRARVPDAEFFGIGGPKMQAEGFDARWPCELLAVHGYVDALKRYRELSGIRKKLLKQVRRERPDAFIGVDAPDFNLWLEGKIKAAGIPAIHFVSPSIWAWRGGRIKRIARSVTRMLCMFPFEPELYERAGVPVSYVGHPLADVFPLEPDRAAARERLDIAPERKVVALLPGSRQSEVRNLGELFIETAAMLAQRHPDVLFLVPLATRETRELFSAALARNKGDELPLRMLFGHAVDAMTAADAVLVASGTASLEAALLKRPMVITYRMGKWQYRLMKRMAYLPWIGLPNILCREGLVPELVQDDATPPKLADALERWLVDPAACAALTERFTALHHSLRQNTAEKAAAAVLPYLSSSASCQPVSVSA.

It belongs to the LpxB family.

The enzyme catalyses a lipid X + a UDP-2-N,3-O-bis[(3R)-3-hydroxyacyl]-alpha-D-glucosamine = a lipid A disaccharide + UDP + H(+). The protein operates within bacterial outer membrane biogenesis; LPS lipid A biosynthesis. Condensation of UDP-2,3-diacylglucosamine and 2,3-diacylglucosamine-1-phosphate to form lipid A disaccharide, a precursor of lipid A, a phosphorylated glycolipid that anchors the lipopolysaccharide to the outer membrane of the cell. The polypeptide is Lipid-A-disaccharide synthase (Azoarcus sp. (strain BH72)).